Here is a 408-residue protein sequence, read N- to C-terminus: CinA-like protein (408 aa).

Belongs to the CinA family.

This is CinA-like protein from Anaeromyxobacter dehalogenans (strain 2CP-1 / ATCC BAA-258).